Consider the following 183-residue polypeptide: Oligoribonuclease (183 aa).

The Exonuclease domain occupies 8 to 171 (LIWLDMEMTG…ADIRESIAEL (164 aa)). The active site involves Tyr129.

It belongs to the oligoribonuclease family.

It localises to the cytoplasm. Its function is as follows. 3'-to-5' exoribonuclease specific for small oligoribonucleotides. The polypeptide is Oligoribonuclease (Aromatoleum aromaticum (strain DSM 19018 / LMG 30748 / EbN1) (Azoarcus sp. (strain EbN1))).